The primary structure comprises 336 residues: Glycerol-3-phosphate dehydrogenase [NAD(P)+] (336 aa).

Residues serine 13, tryptophan 14, arginine 34, and lysine 108 each contribute to the NADPH site. Sn-glycerol 3-phosphate-binding residues include lysine 108, glycine 138, and serine 140. Alanine 142 contacts NADPH. Positions 193, 246, 256, 257, and 258 each coordinate sn-glycerol 3-phosphate. Catalysis depends on lysine 193, which acts as the Proton acceptor. Arginine 257 is an NADPH binding site. Valine 281 and glutamate 283 together coordinate NADPH.

Belongs to the NAD-dependent glycerol-3-phosphate dehydrogenase family.

Its subcellular location is the cytoplasm. It catalyses the reaction sn-glycerol 3-phosphate + NAD(+) = dihydroxyacetone phosphate + NADH + H(+). The catalysed reaction is sn-glycerol 3-phosphate + NADP(+) = dihydroxyacetone phosphate + NADPH + H(+). The protein operates within membrane lipid metabolism; glycerophospholipid metabolism. In terms of biological role, catalyzes the reduction of the glycolytic intermediate dihydroxyacetone phosphate (DHAP) to sn-glycerol 3-phosphate (G3P), the key precursor for phospholipid synthesis. This is Glycerol-3-phosphate dehydrogenase [NAD(P)+] from Carboxydothermus hydrogenoformans (strain ATCC BAA-161 / DSM 6008 / Z-2901).